The following is a 345-amino-acid chain: Serine proteinase inhibitor 2 (345 aa).

Belongs to the serpin family. Poxviruses subfamily.

The protein localises to the host cytoplasm. Viral serpin that inhibits both cysteine and serine proteinases involved in the regulation of host inflammatory and apoptosis processes. Major anti-apoptotic protein which inhibits both intrinsic and extrinsic pathways and strongly cleaves host CASP1 and CASP8 but is a rather poor inhibitor of host CASP3. Prevents the proteolytic activity of host interleukin-1-beta converting enzyme (ICE) and ICE-like enzymes. Can also block apoptosis through host tumor necrosis factor (TNF) receptor. The inhibition of host ICE is an example of a 'cross-class' interaction, in which a serpin inhibits a non-serine proteinase. Also inhibits granzyme B. This is Serine proteinase inhibitor 2 (OPG199) from Rabbitpox virus (strain Utrecht) (RPV).